A 404-amino-acid chain; its full sequence is Nicotinate phosphoribosyltransferase (404 aa).

The residue at position 225 (histidine 225) is a Phosphohistidine; by autocatalysis.

This sequence belongs to the NAPRTase family. Transiently phosphorylated on a His residue during the reaction cycle. Phosphorylation strongly increases the affinity for substrates and increases the rate of nicotinate D-ribonucleotide production. Dephosphorylation regenerates the low-affinity form of the enzyme, leading to product release.

It carries out the reaction nicotinate + 5-phospho-alpha-D-ribose 1-diphosphate + ATP + H2O = nicotinate beta-D-ribonucleotide + ADP + phosphate + diphosphate. It participates in cofactor biosynthesis; NAD(+) biosynthesis; nicotinate D-ribonucleotide from nicotinate: step 1/1. Its function is as follows. Catalyzes the synthesis of beta-nicotinate D-ribonucleotide from nicotinate and 5-phospho-D-ribose 1-phosphate at the expense of ATP. In Acinetobacter baumannii (strain ATCC 17978 / DSM 105126 / CIP 53.77 / LMG 1025 / NCDC KC755 / 5377), this protein is Nicotinate phosphoribosyltransferase.